A 99-amino-acid polypeptide reads, in one-letter code: NADH-ubiquinone oxidoreductase chain 4L (99 aa).

Transmembrane regions (helical) follow at residues 1 to 21, 25 to 45, and 56 to 76; these read MTIY…FFTQ, ILSL…SVAV, and VMIL…SLLV.

It belongs to the complex I subunit 4L family.

It localises to the mitochondrion membrane. It catalyses the reaction a ubiquinone + NADH + 5 H(+)(in) = a ubiquinol + NAD(+) + 4 H(+)(out). Functionally, core subunit of the mitochondrial membrane respiratory chain NADH dehydrogenase (Complex I) that is believed to belong to the minimal assembly required for catalysis. Complex I functions in the transfer of electrons from NADH to the respiratory chain. The immediate electron acceptor for the enzyme is believed to be ubiquinone. The chain is NADH-ubiquinone oxidoreductase chain 4L (ND4L) from Albinaria caerulea (Land snail).